A 144-amino-acid chain; its full sequence is MKQFYIVDSSMLPEVVGKVIAARALLQNGEVKQVSEAVKQVGISRGTYYKYKDYVFLRDPEMASRKAVISLMLHHDRGILSEVLTTMSQVQASIVTINQNIPIHNWASVVMSFDISALQGTLDDLVTKLGDIRGVSDVHLVSVE.

The 76-residue stretch at 68 to 143 (VISLMLHHDR…GVSDVHLVSV (76 aa)) folds into the ACT domain.

Belongs to the UPF0735 family.

This chain is UPF0735 ACT domain-containing protein LSEI_1046, found in Lacticaseibacillus paracasei (strain ATCC 334 / BCRC 17002 / CCUG 31169 / CIP 107868 / KCTC 3260 / NRRL B-441) (Lactobacillus paracasei).